A 143-amino-acid chain; its full sequence is uncharacterized protein (143 aa).

2 consecutive transmembrane segments (helical) span residues 20–39 (FKYC…WITV) and 113–135 (YFSL…ITGL).

The protein localises to the membrane. This is an uncharacterized protein from Saccharomyces cerevisiae (strain ATCC 204508 / S288c) (Baker's yeast).